The following is a 133-amino-acid chain: Ribulose bisphosphate carboxylase small subunit (133 aa).

Belongs to the RuBisCO small chain family. In terms of assembly, heterohexadecamer of 8 large and 8 small subunits.

RuBisCO catalyzes two reactions: the carboxylation of D-ribulose 1,5-bisphosphate, the primary event in carbon dioxide fixation, as well as the oxidative fragmentation of the pentose substrate. Both reactions occur simultaneously and in competition at the same active site. Although the small subunit is not catalytic it is essential for maximal activity. This chain is Ribulose bisphosphate carboxylase small subunit, found in Xanthobacter flavus.